Reading from the N-terminus, the 220-residue chain is dTTP/UTP pyrophosphatase (220 aa).

Asp-83 serves as the catalytic Proton acceptor.

This sequence belongs to the Maf family. YhdE subfamily. A divalent metal cation is required as a cofactor.

The protein resides in the cytoplasm. It carries out the reaction dTTP + H2O = dTMP + diphosphate + H(+). The enzyme catalyses UTP + H2O = UMP + diphosphate + H(+). Nucleoside triphosphate pyrophosphatase that hydrolyzes dTTP and UTP. May have a dual role in cell division arrest and in preventing the incorporation of modified nucleotides into cellular nucleic acids. This Syntrophotalea carbinolica (strain DSM 2380 / NBRC 103641 / GraBd1) (Pelobacter carbinolicus) protein is dTTP/UTP pyrophosphatase.